We begin with the raw amino-acid sequence, 163 residues long: MRIAIYPGTFDPVTNGHLDILKRATEFFDEVIVAVAVDSNKTTLFSLEERIQLLETAAEELSQVKIRGFEGLTVEFARQCGANAIIRGLRAMQDFEYEFQLALMNKKLAADIETIFLMTQSEFSFISSSSIKWAASLKGNISEFVPPHVERAIYKKYHPEIDD.

Position 9 (Thr-9) interacts with substrate. ATP contacts are provided by residues 9-10 (TF) and His-17. Substrate is bound by residues Lys-41, Thr-73, and Arg-87. Residues 88-90 (GLR), Glu-98, and 123-129 (FSFISSS) contribute to the ATP site.

This sequence belongs to the bacterial CoaD family. Homohexamer. Requires Mg(2+) as cofactor.

It localises to the cytoplasm. The enzyme catalyses (R)-4'-phosphopantetheine + ATP + H(+) = 3'-dephospho-CoA + diphosphate. Its pathway is cofactor biosynthesis; coenzyme A biosynthesis; CoA from (R)-pantothenate: step 4/5. Functionally, reversibly transfers an adenylyl group from ATP to 4'-phosphopantetheine, yielding dephospho-CoA (dPCoA) and pyrophosphate. The chain is Phosphopantetheine adenylyltransferase from Desulfitobacterium hafniense (strain Y51).